The chain runs to 276 residues: Vitamin B12-binding protein (276 aa).

The signal sequence occupies residues 1–20; the sequence is MLVIRLIACTFLFITPSLLA. The region spanning 27 to 274 is the Fe/B12 periplasmic-binding domain; sequence RIISLAPHAT…QVCTYLKIAQ (248 aa). Tyr54 serves as a coordination point for cyanocob(III)alamin. Cys187 and Cys267 are oxidised to a cystine.

Belongs to the BtuF family. The complex is composed of two ATP-binding proteins (BtuD), two transmembrane proteins (BtuC) and a solute-binding protein (BtuF).

It is found in the periplasm. Functionally, part of the ABC transporter complex BtuCDF involved in vitamin B12 import. Binds vitamin B12 and delivers it to the periplasmic surface of BtuC. This is Vitamin B12-binding protein from Vibrio cholerae serotype O1 (strain ATCC 39541 / Classical Ogawa 395 / O395).